The sequence spans 1175 residues: 1-phosphatidylinositol 4,5-bisphosphate phosphodiesterase beta-4 (1175 aa).

N-acetylalanine is present on A2. The 151-residue stretch at 313-463 folds into the PI-PLC X-box domain; that stretch reads QEMDHPLAHY…LKRKILIKNK (151 aa). Catalysis depends on residues H328 and H375. A disordered region spans residues 487–512; it reads AAPASILEDDNEEEIESADQEEEAHP. A compositionally biased stretch (acidic residues) spans 493–508; sequence LEDDNEEEIESADQEE. One can recognise a PI-PLC Y-box domain in the interval 565–681; the sequence is LSTMINYAQP…GYLLKPDFMR (117 aa). Residues 684-809 form the C2 domain; the sequence is DRTFDPFSET…SLRNEGNKPL (126 aa). Disordered regions lie at residues 860–904 and 1082–1110; these read SDIA…LGSG and KISM…VREL. Polar residues-rich tracts occupy residues 885–900 and 1085–1094; these read VTPQ…TTAA and MENSKAISQD. T886 bears the Phosphothreonine mark. Residues 1095-1109 show a composition bias toward basic and acidic residues; that stretch reads KSIKNKAERERRVRE.

Requires Ca(2+) as cofactor. In terms of tissue distribution, preferentially expressed in the retina.

It is found in the cell membrane. The catalysed reaction is a 1,2-diacyl-sn-glycero-3-phospho-(1D-myo-inositol-4,5-bisphosphate) + H2O = 1D-myo-inositol 1,4,5-trisphosphate + a 1,2-diacyl-sn-glycerol + H(+). The enzyme catalyses a 1,2-diacyl-sn-glycero-3-phospho-(1D-myo-inositol) + H2O = 1D-myo-inositol 1-phosphate + a 1,2-diacyl-sn-glycerol + H(+). Its function is as follows. Activated phosphatidylinositol-specific phospholipase C enzymes catalyze the production of the second messenger molecules diacylglycerol (DAG) and inositol 1,4,5-trisphosphate (IP3) involved in G-protein coupled receptor signaling pathways. PLCB4 is a direct effector of the endothelin receptor signaling pathway that plays an essential role in lower jaw and middle ear structures development. This Rattus norvegicus (Rat) protein is 1-phosphatidylinositol 4,5-bisphosphate phosphodiesterase beta-4.